The primary structure comprises 775 residues: DNA polymerase (775 aa).

It belongs to the DNA polymerase type-B family.

It carries out the reaction DNA(n) + a 2'-deoxyribonucleoside 5'-triphosphate = DNA(n+1) + diphosphate. This Thermococcus sp. (strain 9oN-7) protein is DNA polymerase (pol).